The following is a 401-amino-acid chain: MTERIVLAYSGGLDTSVAIGWIGEATGAEVIAVAVDVGQGGESLETIRQRALGCGAVEAYVADASDEFANEYCMPTLKANALYQGHYPLVSAISRPVIVKHLVKAAREFGATTVAHGCTGKGNDQVRFEVGIQTLGPDLKCIAPVRDLALTRDKAIAFAEEKGLPIETTKKNPYSIDQNVWGRAVETGYLEDIWNAPTKDIYDYTATPEFPPAPDEVIISFEAGVPVAIDGVRVTPLQAIKELNRRAGAQGVGRIDVVEDRLVGIKSREIYEAPGAMALITAHKHLEDITVEREQARFKATVGQRWSELVYDGQWFSPLKRSLDAFIEDTQKYVSGDIRMTLHGGQAVVNGRRSETSLYDFDLATYDTGDTFDQSMARGFIELWGMSAKVASGRDIRVAGK.

Residue 8-16 (AYSGGLDTS) coordinates ATP. Y87 is an L-citrulline binding site. G117 is a binding site for ATP. L-aspartate is bound by residues T119, N123, and D124. L-citrulline is bound at residue N123. R127, S175, E259, and Y271 together coordinate L-citrulline.

It belongs to the argininosuccinate synthase family. Type 1 subfamily. Homotetramer.

It is found in the cytoplasm. The catalysed reaction is L-citrulline + L-aspartate + ATP = 2-(N(omega)-L-arginino)succinate + AMP + diphosphate + H(+). It functions in the pathway amino-acid biosynthesis; L-arginine biosynthesis; L-arginine from L-ornithine and carbamoyl phosphate: step 2/3. This chain is Argininosuccinate synthase, found in Arthrobacter sp. (strain FB24).